Consider the following 300-residue polypeptide: Protein sprouty homolog 4 (300 aa).

The residue at position 1 (Met1) is an N-acetylmethionine. Disordered regions lie at residues 1 to 28 (MEPPVPQSSVPVNPSSVMVQPLLDSRAP) and 52 to 114 (DYID…RLLD). Composition is skewed to low complexity over residues 7-21 (QSSVPVNPSSVMVQP) and 92-108 (SFSGRPSSVSSSSSTSS). Ser126 carries the phosphoserine modification. Positions 167–274 (KCKECASPRT…GYDRLRRPGC (108 aa)) constitute an SPR domain.

This sequence belongs to the sprouty family. Interacts (via C-terminus) with TESK1 (via both C- and N-termini); the interaction inhibits TESK1 kinase activity. Interacts with RAF1. Interacts with CAV1 (via C-terminus). As to expression, expressed in the embryo and adult tissues including heart, brain, lung, kidney, and skeletal muscle.

The protein resides in the cytoplasm. It localises to the cell projection. It is found in the ruffle membrane. Suppresses the insulin receptor and EGFR-transduced MAPK signaling pathway, but does not inhibit MAPK activation by a constitutively active mutant Ras. Probably impairs the formation of GTP-Ras. Inhibits Ras-independent, but not Ras-dependent, activation of RAF1. Represses integrin-mediated cell spreading via inhibition of TESK1-mediated phosphorylation of cofilin. The chain is Protein sprouty homolog 4 (Spry4) from Mus musculus (Mouse).